The following is a 288-amino-acid chain: 33 kDa chaperonin (288 aa).

2 disulfide bridges follow: Cys235/Cys237 and Cys268/Cys271.

Belongs to the HSP33 family. Post-translationally, under oxidizing conditions two disulfide bonds are formed involving the reactive cysteines. Under reducing conditions zinc is bound to the reactive cysteines and the protein is inactive.

Its subcellular location is the cytoplasm. In terms of biological role, redox regulated molecular chaperone. Protects both thermally unfolding and oxidatively damaged proteins from irreversible aggregation. Plays an important role in the bacterial defense system toward oxidative stress. The chain is 33 kDa chaperonin from Streptococcus suis (strain 98HAH33).